The primary structure comprises 85 residues: Toxin BmKa3 (85 aa).

The first 19 residues, 1–19, serve as a signal peptide directing secretion; that stretch reads MNYLVFFSLALLLMTGVES. One can recognise an LCN-type CS-alpha/beta domain in the interval 21–83; that stretch reads RDGYIADDKN…VPIRVPGKCN (63 aa). 4 disulfides stabilise this stretch: Cys-31/Cys-82, Cys-35/Cys-55, Cys-41/Cys-65, and Cys-45/Cys-67.

This sequence belongs to the long (4 C-C) scorpion toxin superfamily. Sodium channel inhibitor family. Alpha subfamily. In terms of tissue distribution, expressed by the venom gland.

Its subcellular location is the secreted. In terms of biological role, alpha toxins bind voltage-independently at site-3 of sodium channels (Nav) and inhibit the inactivation of the activated channels, thereby blocking neuronal transmission. This Olivierus martensii (Manchurian scorpion) protein is Toxin BmKa3.